Here is a 169-residue protein sequence, read N- to C-terminus: E1B protein, small T-antigen (169 aa).

Belongs to the adenoviridae E1B 19 kDa protein family.

The chain is E1B protein, small T-antigen from Canine adenovirus serotype 1 (strain CLL) (CAdV-1).